Consider the following 567-residue polypeptide: Urease subunit alpha (567 aa).

The Urease domain maps to Gly129 to Phe567. His134, His136, and Lys217 together coordinate Ni(2+). An N6-carboxylysine modification is found at Lys217. Residue His219 participates in substrate binding. 2 residues coordinate Ni(2+): His246 and His272. His320 (proton donor) is an active-site residue. Residue Asp360 participates in Ni(2+) binding.

Belongs to the metallo-dependent hydrolases superfamily. Urease alpha subunit family. In terms of assembly, heterotrimer of UreA (gamma), UreB (beta) and UreC (alpha) subunits. Three heterotrimers associate to form the active enzyme. The apoenzyme interacts with an accessory complex composed of UreD, UreF and UreG, which is required for the assembly of the nickel containing metallocenter of UreC. The UreE protein may also play a direct role as a metallochaperone in nickel transfer to the urease apoprotein. The cofactor is Ni cation. Post-translationally, carboxylation allows a single lysine to coordinate two nickel ions.

Its subcellular location is the cytoplasm. The catalysed reaction is urea + 2 H2O + H(+) = hydrogencarbonate + 2 NH4(+). It functions in the pathway nitrogen metabolism; urea degradation; CO(2) and NH(3) from urea (urease route): step 1/1. Its activity is regulated as follows. The apoenzyme can be activated in vitro in the presence of nickel ions and carbon dioxide, which promotes carboxylation of Lys-217. This Klebsiella aerogenes (Enterobacter aerogenes) protein is Urease subunit alpha.